A 236-amino-acid chain; its full sequence is 5'-methylthioadenosine/S-adenosylhomocysteine nucleosidase (236 aa).

The Proton acceptor role is filled by Glu12. Residues Gly78, Ile153, and 174–175 (ME) contribute to the substrate site. The active-site Proton donor is Asp198.

Belongs to the PNP/UDP phosphorylase family. MtnN subfamily.

The enzyme catalyses S-adenosyl-L-homocysteine + H2O = S-(5-deoxy-D-ribos-5-yl)-L-homocysteine + adenine. It catalyses the reaction S-methyl-5'-thioadenosine + H2O = 5-(methylsulfanyl)-D-ribose + adenine. The catalysed reaction is 5'-deoxyadenosine + H2O = 5-deoxy-D-ribose + adenine. It functions in the pathway amino-acid biosynthesis; L-methionine biosynthesis via salvage pathway; S-methyl-5-thio-alpha-D-ribose 1-phosphate from S-methyl-5'-thioadenosine (hydrolase route): step 1/2. Catalyzes the irreversible cleavage of the glycosidic bond in both 5'-methylthioadenosine (MTA) and S-adenosylhomocysteine (SAH/AdoHcy) to adenine and the corresponding thioribose, 5'-methylthioribose and S-ribosylhomocysteine, respectively. Also cleaves 5'-deoxyadenosine, a toxic by-product of radical S-adenosylmethionine (SAM) enzymes, into 5-deoxyribose and adenine. This is 5'-methylthioadenosine/S-adenosylhomocysteine nucleosidase from Shewanella baltica (strain OS223).